The following is a 364-amino-acid chain: Urease accessory protein UreD (364 aa).

Disordered regions lie at residues 1 to 37 and 201 to 250; these read MDQD…SSPA and PPEV…AGER. Low complexity-rich tracts occupy residues 21–37, 209–218, and 236–248; these read AGSA…SSPA, APDRGAPAAE, and AASS…APAG.

This sequence belongs to the UreD family. UreD, UreF and UreG form a complex that acts as a GTP-hydrolysis-dependent molecular chaperone, activating the urease apoprotein by helping to assemble the nickel containing metallocenter of UreC. The UreE protein probably delivers the nickel.

The protein resides in the cytoplasm. Functionally, required for maturation of urease via the functional incorporation of the urease nickel metallocenter. This is Urease accessory protein UreD from Kocuria rhizophila (strain ATCC 9341 / DSM 348 / NBRC 103217 / DC2201).